Here is a 150-residue protein sequence, read N- to C-terminus: MSSFTITVSFLLVLVFQFPGQTRANPVYGSVSNADLMDFKNLLDHLEDKMPLEDEAMPPQVLSEQNEEVGAPLSPLLEVPPWTGEVNPAQRDGGALGRGPWDASDRSALLKSKLRALLAAPRSLRRSSCFGGRMDRIGAQSGLGCNSFRY.

The signal sequence occupies residues 1–24 (MSSFTITVSFLLVLVFQFPGQTRA). 2 consecutive propeptides follow at residues 25–122 (NPVY…AAPR) and 92–102 (DGGALGRGPWD). Residues 77-100 (LEVPPWTGEVNPAQRDGGALGRGP) are disordered. S128 carries the post-translational modification Phosphoserine. C129 and C145 form a disulfide bridge.

This sequence belongs to the natriuretic peptide family. Homodimer; disulfide-linked antiparallel dimer. In terms of processing, the precursor molecule is proteolytically cleaved by CORIN at Arg-122 to produce the atrial natriuretic peptide. Undergoes further proteolytic cleavage by unknown proteases to give rise to long-acting natriuretic peptide, vessel dilator and kaliuretic peptide. Additional processing gives rise to the auriculin and atriopeptin peptides. In the kidneys, alternative processing by an unknown protease results in the peptide urodilatin. Post-translationally, cleavage by MME initiates degradation of the factor and thereby regulates its activity. Degradation by IDE results in reduced activation of NPR1 (in vitro). During IDE degradation, the resulting products can temporarily stimulate NPR2 to produce cGMP, before the fragments are completely degraded and inactivated by IDE (in vitro). Degraded by IDE. In terms of processing, phosphorylation on Ser-128 decreases vasorelaxant activity. Brain (at protein level).

Its subcellular location is the secreted. It localises to the perikaryon. The protein resides in the cell projection. Functionally, hormone that plays a key role in mediating cardio-renal homeostasis, and is involved in vascular remodeling and regulating energy metabolism. Acts by specifically binding and stimulating NPR1 to produce cGMP, which in turn activates effector proteins, such as PRKG1, that drive various biological responses. Regulates vasodilation, natriuresis, diuresis and aldosterone synthesis and is therefore essential for regulating blood pressure, controlling the extracellular fluid volume and maintaining the fluid-electrolyte balance. Also involved in inhibiting cardiac remodeling and cardiac hypertrophy by inducing cardiomyocyte apoptosis and attenuating the growth of cardiomyocytes and fibroblasts. Plays a role in female pregnancy by promoting trophoblast invasion and spiral artery remodeling in uterus, and thus prevents pregnancy-induced hypertension. In adipose tissue, acts in various cGMP- and PKG-dependent pathways to regulate lipid metabolism and energy homeostasis. This includes up-regulating lipid metabolism and mitochondrial oxygen utilization by activating the AMP-activated protein kinase (AMPK), and increasing energy expenditure by acting via MAPK11 to promote the UCP1-dependent thermogenesis of brown adipose tissue. Binds the clearance receptor NPR3 which removes the hormone from circulation. In terms of biological role, may have a role in cardio-renal homeostasis through regulation of natriuresis, diuresis, vasodilation, and inhibiting aldosterone synthesis. In vitro, promotes the production of cGMP and induces vasodilation. May promote natriuresis, at least in part, by enhancing prostaglandin E2 synthesis resulting in the inhibition of renal Na+-K+-ATPase. However reports on the involvement of this peptide in mammal blood volume and blood pressure homeostasis are conflicting; according to a report, in vivo it is not sufficient to activate cGMP and does not inhibit collecting duct transport nor effect diuresis and natriuresis. Appears to bind to specific receptors that are distinct from the receptors bound by atrial natriuretic peptide and vessel dilator. Possibly enhances protein excretion in urine by decreasing proximal tubular protein reabsorption. Its function is as follows. May have a role in cardio-renal homeostasis through regulation of natriuresis, diuresis, and vasodilation. In vitro, promotes the production of cGMP and induces vasodilation. May promote natriuresis, at least in part, by enhancing prostaglandin E2 synthesis resulting in the inhibition of renal Na+-K+-ATPase. However reports on the involvement of this peptide in mammal blood volume and blood pressure homeostasis are conflicting; according to a report it is not sufficient to activate cGMP and does not inhibit collecting duct transport nor effect diuresis and natriuresis. Appears to bind to specific receptors that are distinct from the receptors bound by the atrial natriuretic and long-acting natriuretic peptides. Possibly functions in protein excretion in urine by maintaining the integrity of the proximal tubules and enhancing protein excretion by decreasing proximal tubular protein reabsorption. May have a role in cardio-renal homeostasis through regulation of diuresis and inhibiting aldosterone synthesis. In vitro, promotes the production of cGMP and induces vasodilation. May promote natriuresis, at least in part, by enhancing prostaglandin E2 synthesis resulting in the inhibition of renal Na+-K+-ATPase. May have a role in potassium excretion but not sodium excretion (natriuresis). Possibly enhances protein excretion in urine by decreasing proximal tubular protein reabsorption. Functionally, hormone produced in the kidneys that appears to be important for maintaining cardio-renal homeostasis. Mediates vasodilation, natriuresis and diuresis primarily in the renal system, in order to maintain the extracellular fluid volume and control the fluid-electrolyte balance. Specifically binds and stimulates cGMP production by renal transmembrane receptors, likely NPR1. Urodilatin not ANP, may be the natriuretic peptide responsible for the regulation of sodium and water homeostasis in the kidney. In terms of biological role, may have a role in cardio-renal homeostasis through regulation of natriuresis and vasodilation. In vivo promotes natriuresis and in vitro, vasodilates renal artery strips. Its function is as follows. May have a role in cardio-renal homeostasis through regulation of regulation of natriuresis and vasodilation. In vivo promotes natriuresis. In vitro, vasodilates intestinal smooth muscle but not smooth muscle strips. May have a role in cardio-renal homeostasis through regulation of natriuresis and vasodilation. In vivo promotes natriuresis. In vitro, selectively vasodilates intestinal and vascular smooth muscle strips. Functionally, may have a role in cardio-renal homeostasis through regulation of natriuresis and vasodilation. In vivo promotes natriuresis. In vitro, selectively vasodilates intestinal smooth muscle but not vascular smooth muscle strips. The polypeptide is Natriuretic peptides A (NPPA) (Sus scrofa (Pig)).